The sequence spans 890 residues: Kinesin-like protein KIF20A (890 aa).

N-acetylserine is present on Ser-2. Ser-7, Ser-14, and Ser-21 each carry phosphoserine. Residues 64 to 507 (KVKVYLRVRP…AKFSAIASQL (444 aa)) enclose the Kinesin motor domain. 160–167 (GVTNSGKT) contacts ATP. Residue Ser-528 is modified to Phosphoserine; by PLK1. A phosphoserine mark is found at Ser-532, Ser-662, Ser-668, Ser-685, and Ser-825. A coiled-coil region spans residues 611 to 762 (LDTQKELLEE…ESLQSAERAC (152 aa)). Residues 763–890 (CHSTGAGKLR…LKSGPFGKKY (128 aa)) are globular. Residues 832–865 (TNQENQQPNQQPPGKKPFLRNLLPRTPTCQSSTD) form a disordered region. Phosphothreonine is present on Thr-857. Phosphoserine is present on residues Ser-867, Ser-878, and Ser-883.

Belongs to the TRAFAC class myosin-kinesin ATPase superfamily. Kinesin family. In terms of processing, phosphorylated by PLK1 at Ser-528 during mitosis, creating a docking site for PLK1 and recruiting PLK1 at central spindle.

Its subcellular location is the golgi apparatus. The protein localises to the cytoplasm. It localises to the cytoskeleton. The protein resides in the spindle. Mitotic kinesin required for chromosome passenger complex (CPC)-mediated cytokinesis. Following phosphorylation by PLK1, involved in recruitment of PLK1 to the central spindle. Interacts with guanosine triphosphate (GTP)-bound forms of RAB6A and RAB6B. May act as a motor required for the retrograde RAB6 regulated transport of Golgi membranes and associated vesicles along microtubules. Has a microtubule plus end-directed motility. The protein is Kinesin-like protein KIF20A (KIF20A) of Homo sapiens (Human).